The chain runs to 397 residues: 3-ketoacyl-CoA thiolase, mitochondrial (397 aa).

A mitochondrion; not cleaved-targeting transit peptide spans methionine 1–proline 16. At lysine 25 the chain carries N6-acetyllysine; alternate. At lysine 25 the chain carries N6-succinyllysine; alternate. Residue cysteine 92 is the Acyl-thioester intermediate of the active site. Position 119 is a phosphothreonine (threonine 119). A Phosphoserine modification is found at serine 121. Tyrosine 127 is subject to Phosphotyrosine. A Phosphothreonine modification is found at threonine 136. Lysine 137 is modified (N6-acetyllysine; alternate). Lysine 137 bears the N6-succinyllysine; alternate mark. Serine 140 carries the post-translational modification Phosphoserine. An N6-acetyllysine; alternate mark is found at lysine 143, lysine 171, lysine 191, and lysine 209. Residues lysine 143, lysine 171, lysine 191, and lysine 209 each carry the N6-succinyllysine; alternate modification. N6-succinyllysine is present on residues lysine 212 and lysine 214. The CoA site is built by arginine 224 and threonine 227. Lysine 234 is subject to N6-acetyllysine; alternate. Lysine 234 carries the N6-succinyllysine; alternate modification. Lysine 240 is subject to N6-succinyllysine. Lysine 241 carries the post-translational modification N6-acetyllysine. Serine 251 is a CoA binding site. N6-acetyllysine occurs at positions 269 and 270. Residue lysine 305 is modified to N6-acetyllysine; alternate. Residue lysine 305 is modified to N6-succinyllysine; alternate. Serine 310 is subject to Phosphoserine. Lysine 312 is subject to N6-acetyllysine; alternate. N6-succinyllysine; alternate is present on lysine 312. Serine 333 is subject to Phosphoserine. An N6-acetyllysine mark is found at lysine 340 and lysine 375. Residue cysteine 382 is the Proton donor/acceptor of the active site.

The protein belongs to the thiolase-like superfamily. Thiolase family. In terms of assembly, homotetramer. Interacts with BNIP3.

The protein localises to the mitochondrion. The enzyme catalyses an acyl-CoA + acetyl-CoA = a 3-oxoacyl-CoA + CoA. It catalyses the reaction 2 acetyl-CoA = acetoacetyl-CoA + CoA. It carries out the reaction acetyl-CoA + H2O = acetate + CoA + H(+). The catalysed reaction is propanoyl-CoA + H2O = propanoate + CoA + H(+). The enzyme catalyses butanoyl-CoA + H2O = butanoate + CoA + H(+). It catalyses the reaction hexanoyl-CoA + H2O = hexanoate + CoA + H(+). It carries out the reaction octanoyl-CoA + H2O = octanoate + CoA + H(+). The catalysed reaction is decanoyl-CoA + H2O = decanoate + CoA + H(+). The enzyme catalyses dodecanoyl-CoA + H2O = dodecanoate + CoA + H(+). It catalyses the reaction tetradecanoyl-CoA + H2O = tetradecanoate + CoA + H(+). It carries out the reaction hexadecanoyl-CoA + H2O = hexadecanoate + CoA + H(+). Its pathway is lipid metabolism; fatty acid beta-oxidation. In the production of energy from fats, this is one of the enzymes that catalyzes the last step of the mitochondrial beta-oxidation pathway, an aerobic process breaking down fatty acids into acetyl-CoA. Using free coenzyme A/CoA, catalyzes the thiolytic cleavage of medium- to long-chain unbranched 3-oxoacyl-CoAs into acetyl-CoA and a fatty acyl-CoA shortened by two carbon atoms. Also catalyzes the condensation of two acetyl-CoA molecules into acetoacetyl-CoA and could be involved in the production of ketone bodies. Also displays hydrolase activity on various fatty acyl-CoAs. Thereby, could be responsible for the production of acetate in a side reaction to beta-oxidation. Abolishes BNIP3-mediated apoptosis and mitochondrial damage. The protein is 3-ketoacyl-CoA thiolase, mitochondrial (ACAA2) of Bos taurus (Bovine).